A 239-amino-acid polypeptide reads, in one-letter code: Ribonuclease HII (239 aa).

Residues 30–221 (GPVAGVDEVG…VRRVANGSGG (192 aa)) form the RNase H type-2 domain. A divalent metal cation-binding residues include D36, E37, and D130.

Belongs to the RNase HII family. It depends on Mn(2+) as a cofactor. Requires Mg(2+) as cofactor.

The protein localises to the cytoplasm. It catalyses the reaction Endonucleolytic cleavage to 5'-phosphomonoester.. Endonuclease that specifically degrades the RNA of RNA-DNA hybrids. The chain is Ribonuclease HII from Mycolicibacterium paratuberculosis (strain ATCC BAA-968 / K-10) (Mycobacterium paratuberculosis).